The sequence spans 88 residues: UPF0250 protein SO_1163 (88 aa).

It belongs to the UPF0250 family.

The polypeptide is UPF0250 protein SO_1163 (Shewanella oneidensis (strain ATCC 700550 / JCM 31522 / CIP 106686 / LMG 19005 / NCIMB 14063 / MR-1)).